The following is an 88-amino-acid chain: MAAKKTESLSFDAALGELEQIVQQLEQGDLPLETALKQFERGIQLARVSKQKLEQAEQQVQILLQQGEQEKLTPFTVEQTSGQNAEEE.

It belongs to the XseB family. As to quaternary structure, heterooligomer composed of large and small subunits.

It localises to the cytoplasm. The catalysed reaction is Exonucleolytic cleavage in either 5'- to 3'- or 3'- to 5'-direction to yield nucleoside 5'-phosphates.. In terms of biological role, bidirectionally degrades single-stranded DNA into large acid-insoluble oligonucleotides, which are then degraded further into small acid-soluble oligonucleotides. The chain is Exodeoxyribonuclease 7 small subunit from Tolumonas auensis (strain DSM 9187 / NBRC 110442 / TA 4).